A 578-amino-acid polypeptide reads, in one-letter code: Lysine--tRNA ligase (578 aa).

Mg(2+) is bound by residues glutamate 414 and glutamate 421.

Belongs to the class-II aminoacyl-tRNA synthetase family. Homodimer. Requires Mg(2+) as cofactor.

The protein resides in the cytoplasm. It carries out the reaction tRNA(Lys) + L-lysine + ATP = L-lysyl-tRNA(Lys) + AMP + diphosphate. This is Lysine--tRNA ligase from Porphyromonas gingivalis (strain ATCC BAA-308 / W83).